The sequence spans 316 residues: 4-hydroxy-3-methylbut-2-enyl diphosphate reductase (316 aa).

Residue C12 participates in [4Fe-4S] cluster binding. Positions 41 and 74 each coordinate (2E)-4-hydroxy-3-methylbut-2-enyl diphosphate. The dimethylallyl diphosphate site is built by H41 and H74. Isopentenyl diphosphate-binding residues include H41 and H74. C96 lines the [4Fe-4S] cluster pocket. Residue H124 coordinates (2E)-4-hydroxy-3-methylbut-2-enyl diphosphate. Residue H124 participates in dimethylallyl diphosphate binding. H124 is an isopentenyl diphosphate binding site. The Proton donor role is filled by E126. T167 is a binding site for (2E)-4-hydroxy-3-methylbut-2-enyl diphosphate. Residue C197 participates in [4Fe-4S] cluster binding. 4 residues coordinate (2E)-4-hydroxy-3-methylbut-2-enyl diphosphate: S225, S226, N227, and S269. 4 residues coordinate dimethylallyl diphosphate: S225, S226, N227, and S269. 4 residues coordinate isopentenyl diphosphate: S225, S226, N227, and S269.

This sequence belongs to the IspH family. Homodimer. Requires [4Fe-4S] cluster as cofactor.

The enzyme catalyses isopentenyl diphosphate + 2 oxidized [2Fe-2S]-[ferredoxin] + H2O = (2E)-4-hydroxy-3-methylbut-2-enyl diphosphate + 2 reduced [2Fe-2S]-[ferredoxin] + 2 H(+). The catalysed reaction is dimethylallyl diphosphate + 2 oxidized [2Fe-2S]-[ferredoxin] + H2O = (2E)-4-hydroxy-3-methylbut-2-enyl diphosphate + 2 reduced [2Fe-2S]-[ferredoxin] + 2 H(+). It participates in isoprenoid biosynthesis; dimethylallyl diphosphate biosynthesis; dimethylallyl diphosphate from (2E)-4-hydroxy-3-methylbutenyl diphosphate: step 1/1. The protein operates within isoprenoid biosynthesis; isopentenyl diphosphate biosynthesis via DXP pathway; isopentenyl diphosphate from 1-deoxy-D-xylulose 5-phosphate: step 6/6. Catalyzes the conversion of 1-hydroxy-2-methyl-2-(E)-butenyl 4-diphosphate (HMBPP) into a mixture of isopentenyl diphosphate (IPP) and dimethylallyl diphosphate (DMAPP). Acts in the terminal step of the DOXP/MEP pathway for isoprenoid precursor biosynthesis. The protein is 4-hydroxy-3-methylbut-2-enyl diphosphate reductase of Shigella flexneri serotype 5b (strain 8401).